We begin with the raw amino-acid sequence, 173 residues long: Probable glutathione peroxidase 5 (173 aa).

G2 carries the N-myristoyl glycine lipid modification. The active site involves C46.

Belongs to the glutathione peroxidase family. Ubiquitous.

It is found in the cell membrane. It catalyses the reaction 2 glutathione + H2O2 = glutathione disulfide + 2 H2O. Functionally, may constitute a glutathione peroxidase-like protective system against oxidative stresses. This Arabidopsis thaliana (Mouse-ear cress) protein is Probable glutathione peroxidase 5 (GPX5).